A 694-amino-acid chain; its full sequence is Elongation factor G (694 aa).

Positions 6–288 constitute a tr-type G domain; the sequence is KLYRNIGIAA…GVIEYLPSPT (283 aa). GTP is bound by residues 15–22, 86–90, and 140–143; these read AHVDAGKT, DTPGH, and NKMD.

It belongs to the TRAFAC class translation factor GTPase superfamily. Classic translation factor GTPase family. EF-G/EF-2 subfamily.

It localises to the cytoplasm. Catalyzes the GTP-dependent ribosomal translocation step during translation elongation. During this step, the ribosome changes from the pre-translocational (PRE) to the post-translocational (POST) state as the newly formed A-site-bound peptidyl-tRNA and P-site-bound deacylated tRNA move to the P and E sites, respectively. Catalyzes the coordinated movement of the two tRNA molecules, the mRNA and conformational changes in the ribosome. In Legionella pneumophila subsp. pneumophila (strain Philadelphia 1 / ATCC 33152 / DSM 7513), this protein is Elongation factor G.